The chain runs to 427 residues: Gamma-glutamyl phosphate reductase (427 aa).

Belongs to the gamma-glutamyl phosphate reductase family.

The protein localises to the cytoplasm. It carries out the reaction L-glutamate 5-semialdehyde + phosphate + NADP(+) = L-glutamyl 5-phosphate + NADPH + H(+). Its pathway is amino-acid biosynthesis; L-proline biosynthesis; L-glutamate 5-semialdehyde from L-glutamate: step 2/2. Functionally, catalyzes the NADPH-dependent reduction of L-glutamate 5-phosphate into L-glutamate 5-semialdehyde and phosphate. The product spontaneously undergoes cyclization to form 1-pyrroline-5-carboxylate. This is Gamma-glutamyl phosphate reductase from Rhizobium etli (strain CIAT 652).